We begin with the raw amino-acid sequence, 682 residues long: MIDQYKHQQLQIGLVSPQQIKAWANKNLPNGEVIGQVTRPSTFHYKTDKPEKDGLFCERIFGPIKSGICACGNSRASGAENEDERFCQKCGVEFADSRIRRYQMGYIKLACPVTHVWYLKGLPSYIANLLDKPLKKLEGLVYGDFSFARPSTKKPTFLRLRGLFEEEIASCNHSISPFFSTPSFTTFRNREIATGAGAIREQLADLDLQIIIENSLVEWKELEDEGYSGDEWEDRKRRIRKVFLIRRMQLAKHFIQTNVEPEWMVLCLLPVLPPELRPIVYRSGDKVVTSDINELYKRVIRRNNNLAYLLKRSELAPADLVMCQEKLVQEAVDTLLDSGSRGQPTRDGHNKVYKSLSDVIEGKEGRFRETLLGKRVDYSGRSVIVVGPSLSLHQCGLPLEIAIKLFQLFVIRDLITKRATSNVRIAKRKIWEKEPIVWEILQEVMRGHPVLLNRAPTLHRLGIQAFQPTLVEGRTISLHPLVCKGFNADFDGDQMAVHLPLSLEAQAEARLLMFSHMNLLSPAIGDPICVPTQDMLIGLYVLTIGNPRGICANRYNSCGNYPNQKVNYNNNNSTYTRDKEPIFYSSYDALGAYRQKLISLDSPLWLRWKLDQRAIGSREVPIEVQYESLGTYHEIYAHYLIVGNRKKEICSIYIRTTLGHISFYREIEEAVQGFSQAYSYTI.

Zn(2+) contacts are provided by C69, C71, C87, and C90. The Mg(2+) site is built by D489, D491, and D493.

Belongs to the RNA polymerase beta' chain family. RpoC1 subfamily. As to quaternary structure, in plastids the minimal PEP RNA polymerase catalytic core is composed of four subunits: alpha, beta, beta', and beta''. When a (nuclear-encoded) sigma factor is associated with the core the holoenzyme is formed, which can initiate transcription. Mg(2+) is required as a cofactor. Zn(2+) serves as cofactor.

It localises to the plastid. Its subcellular location is the chloroplast. The catalysed reaction is RNA(n) + a ribonucleoside 5'-triphosphate = RNA(n+1) + diphosphate. Its function is as follows. DNA-dependent RNA polymerase catalyzes the transcription of DNA into RNA using the four ribonucleoside triphosphates as substrates. The sequence is that of DNA-directed RNA polymerase subunit beta' from Brachypodium distachyon (Purple false brome).